The primary structure comprises 141 residues: Hemoglobin subunit alpha (141 aa).

One can recognise a Globin domain in the interval Val1–Arg141. Residue Ser3 is modified to Phosphoserine. N6-succinyllysine is present on residues Lys7 and Lys11. Residue Lys16 is modified to N6-acetyllysine; alternate. Residue Lys16 is modified to N6-succinyllysine; alternate. Tyr24 carries the phosphotyrosine modification. Ser35 carries the post-translational modification Phosphoserine. Residue Lys40 is modified to N6-succinyllysine. Residue Ser49 is modified to Phosphoserine. His58 is a binding site for O2. Heme b is bound at residue His87. Ser102 carries the phosphoserine modification. The residue at position 108 (Thr108) is a Phosphothreonine. A phosphoserine mark is found at Ser124 and Ser131. Phosphothreonine is present on residues Thr134 and Thr137. Ser138 bears the Phosphoserine mark.

This sequence belongs to the globin family. As to quaternary structure, heterotetramer of two alpha chains and two beta chains. In terms of tissue distribution, red blood cells.

Its function is as follows. Involved in oxygen transport from the lung to the various peripheral tissues. In terms of biological role, hemopressin acts as an antagonist peptide of the cannabinoid receptor CNR1. Hemopressin-binding efficiently blocks cannabinoid receptor CNR1 and subsequent signaling. This chain is Hemoglobin subunit alpha (HBA), found in Theropithecus gelada (Gelada baboon).